A 638-amino-acid polypeptide reads, in one-letter code: Golgin subfamily A member 8S (638 aa).

Over residues 1 to 11 (MWPQARLPPHP) the composition is skewed to pro residues. Positions 1–84 (MWPQARLPPH…GESPTSSATL (84 aa)) are disordered. Positions 50 to 62 (TNGSIHETATSGG) are enriched in polar residues. Coiled-coil stretches lie at residues 105 to 160 (VSQL…LNTD), 223 to 275 (LEQS…MSQE), and 318 to 417 (EAEL…QQKQ). 3 disordered regions span residues 427-453 (ALPG…PSIP), 510-532 (KDAA…DEAA), and 556-575 (AHNP…ELGA). A compositionally biased stretch (basic and acidic residues) spans 434–446 (GGGHLDSEGEEAP). Gly residues predominate over residues 514–525 (LGGGHHQAGAQG). A compositionally biased stretch (low complexity) spans 561–574 (DEPGPGAPAPQELG).

The protein belongs to the GOLGA8 family.

This Homo sapiens (Human) protein is Golgin subfamily A member 8S.